Here is a 384-residue protein sequence, read N- to C-terminus: MNKDGTVVLMNELASYASDPSKTRGRRHSEPPPENRTEFQRDRDRIIHSNAFRRLEYKTQVFVNHEGDLFRTRLTHSLEVAQIARTLARSLRVSEDLTEAIALAHDLGHTPFGHAGQDELNACMRELAPQAGGFEHNLQSLRVVDELEERYAEFNGLNLCFETREGILKHCSATHARQLGAVGERFLDRTQPSLEAQLANLADEVAYNNHDVDDGLRSGLITLEQLQEVGIFARHYAEVARRYPQLAPRRATSETIRRMINTLIVDLTATSLARIRDHAPASADDVRRAPPLAGFSAAVRREADELKKFLFDNLYRHYRVVRMTTKVQRIVRELFQAFLGDPRLLPPDYRREQPQDQARAISDYIAGMTDRYAIREHRRLFEMG.

The disordered stretch occupies residues 12-39 (ELASYASDPSKTRGRRHSEPPPENRTEF). Residues 28–39 (HSEPPPENRTEF) are compositionally biased toward basic and acidic residues. In terms of domain architecture, HD spans 73–208 (RLTHSLEVAQ…ANLADEVAYN (136 aa)).

This sequence belongs to the dGTPase family. Type 2 subfamily.

This Bordetella parapertussis (strain 12822 / ATCC BAA-587 / NCTC 13253) protein is Deoxyguanosinetriphosphate triphosphohydrolase-like protein.